A 270-amino-acid polypeptide reads, in one-letter code: Putative pyruvate, phosphate dikinase regulatory protein (270 aa).

Residue 147–154 coordinates ADP; it reads GVSRSSKT.

This sequence belongs to the pyruvate, phosphate/water dikinase regulatory protein family. PDRP subfamily.

The enzyme catalyses N(tele)-phospho-L-histidyl/L-threonyl-[pyruvate, phosphate dikinase] + ADP = N(tele)-phospho-L-histidyl/O-phospho-L-threonyl-[pyruvate, phosphate dikinase] + AMP + H(+). It carries out the reaction N(tele)-phospho-L-histidyl/O-phospho-L-threonyl-[pyruvate, phosphate dikinase] + phosphate + H(+) = N(tele)-phospho-L-histidyl/L-threonyl-[pyruvate, phosphate dikinase] + diphosphate. Bifunctional serine/threonine kinase and phosphorylase involved in the regulation of the pyruvate, phosphate dikinase (PPDK) by catalyzing its phosphorylation/dephosphorylation. The protein is Putative pyruvate, phosphate dikinase regulatory protein of Citrifermentans bemidjiense (strain ATCC BAA-1014 / DSM 16622 / JCM 12645 / Bem) (Geobacter bemidjiensis).